A 111-amino-acid chain; its full sequence is WAP four-disulfide core domain protein 12 (111 aa).

Residues 1–23 form the signal peptide; it reads MGSSSFLVLMVSLALVTLVAAEG. In terms of domain architecture, WAP spans 27–74; sequence NIEKPGVCPADNIRCIKSDPPQCHTDQDCQGIRKCCYLHCGFKCVIPV. Cystine bridges form between cysteine 34–cysteine 62, cysteine 41–cysteine 66, cysteine 49–cysteine 61, and cysteine 55–cysteine 70. Residues 80–111 are disordered; sequence GGNKDEDVSRPCPEPGWEAKPPGVFSTRCPQK.

The protein resides in the secreted. Its function is as follows. Antibacterial protein. Putative acid-stable proteinase inhibitor. This is WAP four-disulfide core domain protein 12 (WFDC12) from Callithrix jacchus (White-tufted-ear marmoset).